We begin with the raw amino-acid sequence, 207 residues long: Ribosomal RNA small subunit methyltransferase G (207 aa).

Residues Gly76, Gln81, 127–128 (VE), and Arg141 contribute to the S-adenosyl-L-methionine site.

It belongs to the methyltransferase superfamily. RNA methyltransferase RsmG family.

The protein resides in the cytoplasm. It carries out the reaction guanosine(527) in 16S rRNA + S-adenosyl-L-methionine = N(7)-methylguanosine(527) in 16S rRNA + S-adenosyl-L-homocysteine. Specifically methylates the N7 position of guanine in position 527 of 16S rRNA. The sequence is that of Ribosomal RNA small subunit methyltransferase G from Neisseria gonorrhoeae (strain ATCC 700825 / FA 1090).